A 538-amino-acid polypeptide reads, in one-letter code: Succinyl-CoA:acetate CoA-transferase (538 aa).

305–309 (GVGSV) is a binding site for CoA. The active-site 5-glutamyl coenzyme A thioester intermediate is E330. Residues N420 and G424 each coordinate CoA.

It belongs to the acetyl-CoA hydrolase/transferase family.

It catalyses the reaction succinyl-CoA + acetate = succinate + acetyl-CoA. Its function is as follows. Forms succinyl-CoA from succinate and acetyl-CoA. This Clostridium kluyveri (strain ATCC 8527 / DSM 555 / NBRC 12016 / NCIMB 10680 / K1) protein is Succinyl-CoA:acetate CoA-transferase.